The chain runs to 234 residues: Sugar fermentation stimulation protein A (234 aa).

The H-T-H motif DNA-binding region spans 201 to 220 (LLSEAQNKGVEVLAYKAELS).

This sequence belongs to the SfsA family.

Functionally, binds to DNA non-specifically. Could be a regulatory factor involved in maltose metabolism. The sequence is that of Sugar fermentation stimulation protein A from Salmonella choleraesuis (strain SC-B67).